A 254-amino-acid chain; its full sequence is UPF0328 protein ECU01_0070/ECU01_1540/ECU02_1570/ECU04_0080/ECU08_2100 (254 aa).

It belongs to the UPF0328 family.

The protein is UPF0328 protein ECU01_0070/ECU01_1540/ECU02_1570/ECU04_0080/ECU08_2100 of Encephalitozoon cuniculi (strain GB-M1) (Microsporidian parasite).